We begin with the raw amino-acid sequence, 124 residues long: Holo-[acyl-carrier-protein] synthase (124 aa).

Residues Asp7 and Glu55 each coordinate Mg(2+).

The protein belongs to the P-Pant transferase superfamily. AcpS family. The cofactor is Mg(2+).

It localises to the cytoplasm. The catalysed reaction is apo-[ACP] + CoA = holo-[ACP] + adenosine 3',5'-bisphosphate + H(+). Its function is as follows. Transfers the 4'-phosphopantetheine moiety from coenzyme A to a Ser of acyl-carrier-protein. In Borrelia garinii subsp. bavariensis (strain ATCC BAA-2496 / DSM 23469 / PBi) (Borreliella bavariensis), this protein is Holo-[acyl-carrier-protein] synthase.